The chain runs to 40 residues: MTLPGGVILVFILVGLACIAIIATIIYRKWQARQRGLQRF.

Residues 1–2 constitute a propeptide that is removed on maturation; that stretch reads MT. Residues 3-26 form a helical membrane-spanning segment; the sequence is LPGGVILVFILVGLACIAIIATII. Topologically, residues 27–40 are cytoplasmic; sequence YRKWQARQRGLQRF.

Monomer and homodimer. Associated with the 100 kDa subunit of the plasma membrane H(+)-ATPase.

It is found in the cell membrane. The protein is Plasma membrane ATPase proteolipid 1 (PMP1) of Saccharomyces cerevisiae (strain ATCC 204508 / S288c) (Baker's yeast).